We begin with the raw amino-acid sequence, 190 residues long: Potassium-transporting ATPase KdpC subunit (190 aa).

A helical membrane pass occupies residues 15 to 35 (LWILTALIYPAIVLVIGQLVF).

This sequence belongs to the KdpC family. The system is composed of three essential subunits: KdpA, KdpB and KdpC.

It localises to the cell inner membrane. Functionally, part of the high-affinity ATP-driven potassium transport (or Kdp) system, which catalyzes the hydrolysis of ATP coupled with the electrogenic transport of potassium into the cytoplasm. This subunit acts as a catalytic chaperone that increases the ATP-binding affinity of the ATP-hydrolyzing subunit KdpB by the formation of a transient KdpB/KdpC/ATP ternary complex. The protein is Potassium-transporting ATPase KdpC subunit of Synechocystis sp. (strain ATCC 27184 / PCC 6803 / Kazusa).